Here is a 490-residue protein sequence, read N- to C-terminus: DNA-binding protein D-ETS-3 (490 aa).

Disordered regions lie at residues 190–255 (TASS…SGGG) and 271–294 (SSTQ…SQLR). Over residues 196–207 (HVEHKVRADKST) the composition is skewed to basic and acidic residues. Residues 211–227 (ATTSSHAAAPSSSSSAS) are compositionally biased toward low complexity. Residues 244-255 (GTGGGASASGGG) show a composition bias toward gly residues. Low complexity predominate over residues 271–280 (SSTQSQGYSS). Positions 317–397 (IQLWQFLLEL…HGKRYAYKFD (81 aa)) form a DNA-binding region, ETS.

It belongs to the ETS family. In terms of tissue distribution, embryonic ventral nervous system, higher in the thoracic than abdominal segments.

It localises to the nucleus. The protein is DNA-binding protein D-ETS-3 (Ets65A) of Drosophila melanogaster (Fruit fly).